A 965-amino-acid chain; its full sequence is GGISVPGPMGPSGPRGLPGPPGPGPQGFQGPPGEPGEPGSSGPMGPRGPPGPPGKNGDDGEAGKPGRPGERGPPGPQGARGLPGTAGLPGMKGHRGFSGLDGAKGDAGPAGPKGEPGSPGENGAPGQMGPRGPGERGRPGASGPAGARGNDGATGAAGPPGPTGPAGPPGFPGAVGAKGEAGPQGARGSEGPQGVRGEPGPPGPAGAAGPAGNPGADGQPGAKGANGAPGIAGAPGFPGARGPSGPQGPSGPPGPKGNSGEPGAPGGEPGPTGIQGPPGPAGEEGKRGARGEPGPTGLPGPPGERGGPGSRGFPGADGVAGPKGSPGEAGRPGEAGLPGAKGLTGSPGSPGPDGKTGPPGPAGQDGRPGPPGPPGARGQAGVMGFPGPKGAAGEPGKAGERGVPGPPGAVGPAGKDGEAGAQGPPGPAGPAGERGEQGPAGPGFQGLPGPAGPPGEAGKPGEQGVPGDLGAPGPSGARGERGFPGERGVQGPPGPAGPRGSSQGAPGLQGMPGERGAAGLPGPKGDRGDAGPKGADGAPGKDGVRGLTGPIGPPGPAGAPGDKGESGPSGPAGPTGARGAPGDRGEPGPPGPAGFAGPPGADGQPGAKGEPGDAGAKGDAGPPGPAGPTGAPGPIGNLGAPGPKGARGSAGPPGATGFPGAAGRVGPPGPSGNAGPPGPPGPVGKEGGKGPRGETGPAGEVGPPGPPGPSGEKGSPGADGPAGAPGTPGPQGISGQRGVVGLPGQRGERGFPGLPGPSGEPGKQGPSGSSGERGPPGPMGPPGLAGPPGESGREGPGAEGSPGRDGSPGPKGDRGEGPPGAPGAPGAPGPVGPAGKSGDRGETGPGPAGPAGPAGARGPAGPQGPRGDKGETGEQGDRGIKGHRGFSGLQGPAGPPGSPGEQGPSGASGPAGPRGPPGSAGSPGKDGLNGLPGPIGPPGPRGRTGDAGPVGPPGPPGPPGPPGPP.

Residues 1–965 (GGISVPGPMG…PGPPGPPGPP (965 aa)) are disordered. P18, P21, P23, P32, P35, P38, P53, P68, P74, P83, and P89 each carry 4-hydroxyproline. Residues 26 to 44 (QGFQGPPGEPGEPGSSGPM) show a composition bias toward low complexity. The span at 56–70 (NGDDGEAGKPGRPGE) shows a compositional bias: basic and acidic residues. Position 92 is a 5-hydroxylysine; alternate (K92). K92 is a glycosylation site (O-linked (Gal...) hydroxylysine; alternate). The residue at position 98 (S98) is a Phosphoserine. Residues 106-122 (DAGPAGPKGEPGSPGEN) show a composition bias toward low complexity. 4-hydroxyproline occurs at positions 116, 119, 125, 139, 160, 169, 172, 199, 202, 214, 220, 229, 235, 238, and 253. Low complexity predominate over residues 139–157 (PGASGPAGARGNDGATGAA). Pro residues predominate over residues 159 to 171 (PPGPTGPAGPPGF). A compositionally biased stretch (low complexity) spans 205-244 (AGAAGPAGNPGADGQPGAKGANGAPGIAGAPGFPGARGPS). K256 carries the 5-hydroxylysine modification. 4-hydroxyproline occurs at positions 262, 265, 269, 278, 293, 299, 308, and 314. Positions 303–312 (GERGGPGSRG) are enriched in gly residues. K323 is subject to 5-hydroxylysine. 4-hydroxyproline occurs at positions 326, 332, 338, 347, 350, 359, 368, 374, 386, 395, 404, 407, 425, 442, 448, 454, 460, 466, 472, 484, 493, 506, 512, and 521. The span at 341–367 (KGLTGSPGSPGPDGKTGPPGPAGQDGR) shows a compositional bias: low complexity. The segment covering 376-395 (ARGQAGVMGFPGPKGAAGEP) has biased composition (low complexity). A compositionally biased stretch (low complexity) spans 454-463 (PGEAGKPGEQ). Residue K533 is modified to 5-hydroxylysine. 3 positions are modified to 4-hydroxyproline: P539, P554, and P560. Low complexity predominate over residues 566-580 (SGPSGPAGPTGARGA). S569 bears the Phosphoserine mark. 4-hydroxyproline is present on residues P581, P587, P590, P599, P605, P623, P632, and P641. Over residues 593–620 (AGFAGPPGADGQPGAKGEPGDAGAKGDA) the composition is skewed to low complexity. At K644 the chain carries 5-hydroxylysine. A compositionally biased stretch (low complexity) spans 649-665 (SAGPPGATGFPGAAGRV). 2 positions are modified to 4-hydroxyproline: P653 and P659. A 3-hydroxyproline modification is found at P667. 4-hydroxyproline occurs at positions 668, 677, 680, 716, 725, 743, 752, 755, 761, 776, 782, 788, 796, and 802. A compositionally biased stretch (low complexity) spans 710–725 (SGEKGSPGADGPAGAP). Residues 775-785 (PPGPMGPPGLA) show a composition bias toward pro residues. K811 carries the 5-hydroxylysine modification. 4-hydroxyproline occurs at positions 819, 822, and 825. Over residues 819–831 (PGAPGAPGAPGPV) the composition is skewed to pro residues. A compositionally biased stretch (low complexity) spans 851 to 865 (AGPAGARGPAGPQGP). Residues 866–880 (RGDKGETGEQGDRGI) show a composition bias toward basic and acidic residues. K869 is modified (5-hydroxylysine). At K881 the chain carries 5-hydroxylysine; alternate. The O-linked (Gal...) hydroxylysine; alternate glycan is linked to K881. 4-hydroxyproline occurs at positions 896, 899, 917, and 932. Over residues 899–932 (PGEQGPSGASGPAGPRGPPGSAGSPGKDGLNGLP) the composition is skewed to low complexity. At P937 the chain carries 3-hydroxyproline. P938 carries the 4-hydroxyproline modification. Residues 950–965 (VGPPGPPGPPGPPGPP) are compositionally biased toward pro residues. The residue at position 952 (P952) is a 3-hydroxyproline. The residue at position 953 (P953) is a 4-hydroxyproline. P955 carries the post-translational modification 3-hydroxyproline. At P956 the chain carries 4-hydroxyproline. P958 is modified (3-hydroxyproline). 4-hydroxyproline is present on residues P959, P962, and P965.

It belongs to the fibrillar collagen family. Trimers of one alpha 2(I) and two alpha 1(I) chains. Contains mostly 4-hydroxyproline. Proline residues at the third position of the tripeptide repeating unit (G-X-Y) are hydroxylated in some or all of the chains. In terms of processing, contains 3-hydroxyproline at a few sites. This modification occurs on the first proline residue in the sequence motif Gly-Pro-Hyp, where Hyp is 4-hydroxyproline. Post-translationally, lysine residues at the third position of the tripeptide repeating unit (G-X-Y) are 5-hydroxylated in some or all of the chains. O-glycosylated on hydroxylated lysine residues. The O-linked glycan consists of a Glc-Gal disaccharide. In terms of tissue distribution, expressed in bones.

Its subcellular location is the secreted. The protein resides in the extracellular space. It is found in the extracellular matrix. Its function is as follows. Type I collagen is a member of group I collagen (fibrillar forming collagen). This is Collagen alpha-1(I) chain from Acratocnus sp. (strain SLP-2019) (Ground sloth).